A 515-amino-acid chain; its full sequence is Microtubule-associated protein 70-4 (515 aa).

Coiled-coil stretches lie at residues 26 to 106 (VVDE…ALSA) and 136 to 351 (LESD…NTSA). The interval 208–410 (LLEKSNRQQV…KQPGSETEAA (203 aa)) is required for targeting to microtubules. A disordered region spans residues 340–515 (DDMRNESSNT…VKSTKDSCEI (176 aa)). Over residues 345-362 (ESSNTSASNKDNATSKQA) the composition is skewed to polar residues. Positions 364 to 374 (PKRSSSQPRRP) are enriched in low complexity. 3 stretches are compositionally biased toward basic and acidic residues: residues 409-425 (AAEK…DSPR), 450-461 (KVADDAGKENKE), and 484-515 (SEHE…SCEI).

This sequence belongs to the MAP70 family.

The protein localises to the cytoplasm. The protein resides in the cytoskeleton. Functionally, plant-specific protein that interact with microtubules. The chain is Microtubule-associated protein 70-4 (MAP70.4) from Oryza sativa subsp. japonica (Rice).